The sequence spans 238 residues: Sugar fermentation stimulation protein homolog (238 aa).

It belongs to the SfsA family.

The chain is Sugar fermentation stimulation protein homolog from Klebsiella pneumoniae subsp. pneumoniae (strain ATCC 700721 / MGH 78578).